The primary structure comprises 152 residues: Psoriasis susceptibility 1 candidate gene 1 protein (152 aa).

Positions 1–31 are enriched in polar residues; that stretch reads MTCTDQKSHSQRALGTQTPALQGPQLLNTDP. The segment at 1-42 is disordered; that stretch reads MTCTDQKSHSQRALGTQTPALQGPQLLNTDPSSEETRPPHVN.

As to expression, expressed in skin. Also found in heart, placenta, liver, skeletal muscle and pancreas.

This chain is Psoriasis susceptibility 1 candidate gene 1 protein (PSORS1C1), found in Homo sapiens (Human).